A 603-amino-acid polypeptide reads, in one-letter code: Polypeptide N-acetylgalactosaminyltransferase 10 (603 aa).

Residues 1–11 (MRRKEKRLLQA) lie on the Cytoplasmic side of the membrane. Residues 12–31 (VALALAALVLLPNVGLWALY) form a helical; Signal-anchor for type II membrane protein membrane-spanning segment. Residues 32–603 (RERQPDGSPG…STVLENFNKN (572 aa)) lie on the Lumenal side of the membrane. N-linked (GlcNAc...) asparagine glycosylation is found at Asn-124 and Asn-146. 5 disulfide bridges follow: Cys-135–Cys-365, Cys-356–Cys-432, Cys-471–Cys-488, Cys-523–Cys-538, and Cys-563–Cys-578. A catalytic subdomain A region spans residues 144–253 (LPNTSIIIPF…VNWLPPLLDR (110 aa)). Residues Asp-185 and Arg-214 each coordinate substrate. Asp-237 contributes to the Mn(2+) binding site. Residue Ser-238 coordinates substrate. A Mn(2+)-binding site is contributed by His-239. Positions 311–373 (PFESPVMAGG…PCSRVGHIYR (63 aa)) are catalytic subdomain B. Trp-342 is a binding site for substrate. Mn(2+) is bound at residue His-370. Substrate-binding residues include Arg-373 and Tyr-378. The flexible loop stretch occupies residues 373–384 (RKYVPYKVPAGV). The 133-residue stretch at 458-590 (AAWGEIRNVG…SSLTQQWLFE (133 aa)) folds into the Ricin B-type lectin domain. N-linked (GlcNAc...) asparagine glycosylation is present at Asn-593.

It belongs to the glycosyltransferase 2 family. GalNAc-T subfamily. Mn(2+) is required as a cofactor. As to expression, expressed at higher level than GALNT9. In the developing hindbrain region of 14.5 dpc embryos it accumulates in the rapidly dividing, undifferentiated ventricular zone adjacent to the pons. It also accumulates in the regions immediately rostral and caudal to the dorsal rhombic lips differentiating into the cerebellum. Not expressed in the developing choroid plexus.

The protein localises to the golgi apparatus membrane. It carries out the reaction L-seryl-[protein] + UDP-N-acetyl-alpha-D-galactosamine = a 3-O-[N-acetyl-alpha-D-galactosaminyl]-L-seryl-[protein] + UDP + H(+). It catalyses the reaction L-threonyl-[protein] + UDP-N-acetyl-alpha-D-galactosamine = a 3-O-[N-acetyl-alpha-D-galactosaminyl]-L-threonyl-[protein] + UDP + H(+). The protein operates within protein modification; protein glycosylation. In terms of biological role, catalyzes the initial reaction in O-linked oligosaccharide biosynthesis, the transfer of an N-acetyl-D-galactosamine residue to a serine or threonine residue on the protein receptor. Has activity toward Muc5Ac and EA2 peptide substrates. The polypeptide is Polypeptide N-acetylgalactosaminyltransferase 10 (Galnt10) (Mus musculus (Mouse)).